The chain runs to 494 residues: UPF0371 protein SP_0341 (494 aa).

This sequence belongs to the UPF0371 family.

The protein is UPF0371 protein SP_0341 of Streptococcus pneumoniae serotype 4 (strain ATCC BAA-334 / TIGR4).